Reading from the N-terminus, the 206-residue chain is Cytochrome c oxidase assembly factor 8 (206 aa).

Residues 1 to 39 (MLPCAAGARGRGAMVVLRAGKKTFLPPLCRAFACRGCQL) constitute a mitochondrion transit peptide.

The protein belongs to the COA8 family. N-terminal mitochondrial targeting sequence is cleaved from the mature protein once in the mitochondrion. In terms of processing, in normal conditions, the cytoplasmic precursor protein is rapidly degraded by the ubiquitination-proteasome system (UPS). Oxidative stress induces protein stabilization and import into mitochondria where it protects COX from degradation. As to expression, expressed in fibroblasts.

Its subcellular location is the mitochondrion inner membrane. Its function is as follows. Required for cytochrome c complex (COX) IV assembly and function Protects COX assembly from oxidation-induced degradation, COX being the terminal component of the mitochondrial respiratory chain. The sequence is that of Cytochrome c oxidase assembly factor 8 from Homo sapiens (Human).